Here is a 338-residue protein sequence, read N- to C-terminus: Aspartate--ammonia ligase (338 aa).

Belongs to the class-II aminoacyl-tRNA synthetase family. AsnA subfamily.

Its subcellular location is the cytoplasm. It catalyses the reaction L-aspartate + NH4(+) + ATP = L-asparagine + AMP + diphosphate + H(+). It participates in amino-acid biosynthesis; L-asparagine biosynthesis; L-asparagine from L-aspartate (ammonia route): step 1/1. The chain is Aspartate--ammonia ligase from Lactobacillus delbrueckii subsp. bulgaricus (strain ATCC BAA-365 / Lb-18).